Here is a 969-residue protein sequence, read N- to C-terminus: RNA polymerase-associated protein RapA (969 aa).

One can recognise a Helicase ATP-binding domain in the interval 164–334; it reads EVGRRHAPRV…FARLRLLDPD (171 aa). 177 to 184 provides a ligand contact to ATP; sequence DEVGLGKT. A DEAH box motif is present at residues 280–283; sequence DEAH. The region spanning 492 to 686 is the Helicase C-terminal domain; the sequence is RVNWLLEKVK…ELKSQLEQGR (195 aa).

The protein belongs to the SNF2/RAD54 helicase family. RapA subfamily. As to quaternary structure, interacts with the RNAP. Has a higher affinity for the core RNAP than for the holoenzyme. Its ATPase activity is stimulated by binding to RNAP.

Transcription regulator that activates transcription by stimulating RNA polymerase (RNAP) recycling in case of stress conditions such as supercoiled DNA or high salt concentrations. Probably acts by releasing the RNAP, when it is trapped or immobilized on tightly supercoiled DNA. Does not activate transcription on linear DNA. Probably not involved in DNA repair. This Vibrio parahaemolyticus serotype O3:K6 (strain RIMD 2210633) protein is RNA polymerase-associated protein RapA.